A 404-amino-acid chain; its full sequence is Lysophospholipid transporter LplT (404 aa).

12 helical membrane-spanning segments follow: residues 16 to 36, 53 to 73, 91 to 111, 139 to 159, 164 to 184, 195 to 213, 227 to 247, 253 to 273, 285 to 305, 310 to 330, 350 to 370, and 372 to 392; these read MIAV…LLFA, ILQM…GQFA, AGAL…LVGV, MMEA…GVLA, GVAL…NMFI, SWRP…LVLW, LFWG…PIAL, ATPT…AGAA, CLPA…QHSM, LLLI…NALL, GENT…KLGV, and VIAV…LLWG.

It belongs to the major facilitator superfamily. LplT (TC 2.A.1.42) family.

It is found in the cell inner membrane. In terms of biological role, catalyzes the facilitated diffusion of 2-acyl-glycero-3-phosphoethanolamine (2-acyl-GPE) into the cell. The polypeptide is Lysophospholipid transporter LplT (Yersinia enterocolitica serotype O:8 / biotype 1B (strain NCTC 13174 / 8081)).